A 355-amino-acid polypeptide reads, in one-letter code: Chemerin-like receptor 2 (355 aa).

Over 1–41 (MEDLEETLFEEFENYSYALDYYSLESDLEEKVQLGVVHWVS) the chain is Extracellular. A glycan (N-linked (GlcNAc...) asparagine) is linked at N14. The chain crosses the membrane as a helical span at residues 42 to 62 (LVLYCLSFVLGIPGNAIVIWF). Residues 63–73 (TGFKWKRTVST) are Cytoplasmic-facing. Residues 74-94 (LWFLNLAIADFIFLLFLPLYI) traverse the membrane as a helical segment. Residues 95–112 (SYVVMNFHWPFGIWLCKA) are Extracellular-facing. C110 and C187 are disulfide-bonded. A helical membrane pass occupies residues 113-133 (NSFTAQLNMFASVFFLTVISL). Residues 134 to 154 (DHYIHLIHPVLSHRHRTLKNS) are Cytoplasmic-facing. Residues 155–175 (LIVIIFIWLLASLIGGPALYF) form a helical membrane-spanning segment. Residues 176-210 (RDTVEFNNHTLCYNNFQKHDPDLTVIRHHVLTWVK) lie on the Extracellular side of the membrane. The chain crosses the membrane as a helical span at residues 211–231 (YIVGYLFPLLTMSICYLCLIL). Over 232 to 247 (KVKKRSILISSRHFWT) the chain is Cytoplasmic. The chain crosses the membrane as a helical span at residues 248–268 (ILAVVVAFVVCWTPYHLFSIW). The Extracellular portion of the chain corresponds to 269 to 286 (ELTIHHNSYSHHVMQAGI). Residues 287–307 (PLSTGLAFLNSCLNPILYVLI) traverse the membrane as a helical segment. Topologically, residues 308–355 (SKKFQARFRSSVAEILKYTLWEVSCSGTVSEQLRNSETKNLCLLETAQ) are cytoplasmic.

This sequence belongs to the chemokine-like receptor (CMKLR) family.

It is found in the cell membrane. Receptor for chemoattractant adipokine chemerin/RARRES2 suggesting a role for this receptor in the regulation of inflammation and energy homesotasis. Signals mainly via beta-arrestin pathway. Binding of RARRES2 activates weakly G proteins, calcium mobilization and MAPK1/MAPK3 (ERK1/2) phosphorylation too. Acts also as a receptor for TAFA1, mediates its effects on neuronal stem-cell proliferation and differentiation via the activation of ROCK/ERK and ROCK/STAT3 signaling pathway. The chain is Chemerin-like receptor 2 (CMKLR2) from Macaca fascicularis (Crab-eating macaque).